We begin with the raw amino-acid sequence, 430 residues long: Serine--tRNA ligase (430 aa).

L-serine is bound at residue 237-239 (TAE). 268–270 (RSE) serves as a coordination point for ATP. L-serine is bound at residue E291. 355-358 (EISS) contributes to the ATP binding site. S391 contacts L-serine.

This sequence belongs to the class-II aminoacyl-tRNA synthetase family. Type-1 seryl-tRNA synthetase subfamily. In terms of assembly, homodimer. The tRNA molecule binds across the dimer.

It is found in the cytoplasm. The catalysed reaction is tRNA(Ser) + L-serine + ATP = L-seryl-tRNA(Ser) + AMP + diphosphate + H(+). The enzyme catalyses tRNA(Sec) + L-serine + ATP = L-seryl-tRNA(Sec) + AMP + diphosphate + H(+). Its pathway is aminoacyl-tRNA biosynthesis; selenocysteinyl-tRNA(Sec) biosynthesis; L-seryl-tRNA(Sec) from L-serine and tRNA(Sec): step 1/1. In terms of biological role, catalyzes the attachment of serine to tRNA(Ser). Is also able to aminoacylate tRNA(Sec) with serine, to form the misacylated tRNA L-seryl-tRNA(Sec), which will be further converted into selenocysteinyl-tRNA(Sec). The polypeptide is Serine--tRNA ligase (Salmonella schwarzengrund (strain CVM19633)).